Reading from the N-terminus, the 269-residue chain is Proenkephalin-A (269 aa).

The signal sequence occupies residues 1 to 24 (MAQFLRLCIWLLALGSCLLATVQA). 3 disulfide bridges follow: cysteine 26–cysteine 48, cysteine 30–cysteine 52, and cysteine 33–cysteine 65. The interval 165-191 (DNRAKDSHQQESTNNDEDSTSKRYGGF) is disordered. 2 propeptides span residues 198–209 (SPQLEDEAKELQ) and 219–229 (VGRPEWWMDYQ). Phosphoserine is present on serine 253.

The protein belongs to the opioid neuropeptide precursor family. In terms of processing, proenkephalin-A is cleaved by CTSL to generate Met-enkephalin. Processed and degraded by ACE. Post-translationally, probably cleaved by ACE. In terms of processing, processed by ACE to generate Met-enkephalin in the nucleus accumbens of the brain. The N-terminal domain contains 6 conserved cysteines thought to be involved in disulfide bonding and/or processing. As to expression, expressed in brain, heart and testis.

The protein localises to the secreted. It is found in the cytoplasmic vesicle. It localises to the secretory vesicle. The protein resides in the chromaffin granule lumen. Functionally, neuropeptide that competes with and mimic the effects of opiate drugs. They play a role in a number of physiologic functions, including pain perception and responses to stress. Met-enkephalin-Arg-Phe neuropeptide acts as a strong ligand of Mu-type opioid receptor OPRM1. Met-enkephalin-Arg-Phe-binding to OPRM1 in the nucleus accumbens of the brain increases activation of OPRM1, leading to long-term synaptic depression of glutamate release. Its function is as follows. Increases glutamate release in the striatum and decreases GABA concentration in the striatum. In terms of biological role, increases glutamate release in the striatum. This chain is Proenkephalin-A (Penk), found in Rattus norvegicus (Rat).